The primary structure comprises 382 residues: Apolipoprotein A-IV (382 aa).

Positions 1 to 20 (MFLKAVVLTLSLVAVTGAQA) are cleaved as a signal peptide. 13 tandem repeats follow at residues 33 to 54 (DYFS…KSEL), 60 to 81 (ALFQ…KKLV), 82 to 103 (SFAM…EEIR), 115 to 136 (PHAD…QRLG), 137 to 158 (PYAE…NQLT), 159 to 180 (AHAQ…ASLT), 181 to 202 (PYAD…GHLT), 203 to 224 (PYAD…RSLA), 225 to 246 (PYAQ…FQMK), 247 to 268 (KNAE…QKLV), 269 to 286 (PVAE…EELQ), 287 to 308 (KSLA…RNMG), and 309 to 330 (PYGE…QKLG). The segment at 33-330 (DYFSQLSNNA…QVEELRQKLG (298 aa)) is 13 X 22 AA approximate tandem repeats.

The protein belongs to the apolipoprotein A1/A4/E family. Homodimer. Post-translationally, phosphorylation sites are present in the extracellular medium.

It localises to the secreted. Its function is as follows. May have a role in chylomicrons and VLDL secretion and catabolism. Required for efficient activation of lipoprotein lipase by ApoC-II; potent activator of LCAT. Apoa-IV is a major component of HDL and chylomicrons. The chain is Apolipoprotein A-IV (APOA4) from Mirounga angustirostris (Northern elephant seal).